Consider the following 475-residue polypeptide: MGFKFLEVIKPFCIILPEIEKPQRKIQFREKVLWTAITLFIFLVCCQIPLFGIMSSESADPFYWMRVIMASNRGTLMELGITPIVTSGLIMQLLAGAKLIEVGDTPKDRALFNGAQKLFGMIITIGQAVVYVMTGMYGDPSDMGAGICLLIIIQLFIASLIVLLLDELLQKGYGLGSGISLFIATNICETIVWKSFSPATVNTGRGTEFEGAVIALFHLLATRSDKVRALREAFYRPNLPNLMNLSATILVFGIVIYFQGFRVDLPIKSARYRGQYSSYPIKLFYTSNIPIILQSALVSGLYVISQMLAIRFRGNFFIGLLGVWEDVEGGGPARSYPVALCYYLSPPESFFSMFLDPIHGLLYITFMLGSCAFFSKTWIEVSGSAAKDVAKQLKEQQMVMRGHREKSMIHELNRYIPTAAAFGGLCIGALSVLADFIGAIGSGTGILLAVTIIYQYFEIFVKEQAEVGGMGTLLF.

10 consecutive transmembrane segments (helical) span residues 33–53 (LWTA…LFGI), 76–96 (LMEL…LLAG), 118–138 (LFGM…GMYG), 145–165 (AGIC…VLLL), 173–193 (YGLG…TIVW), 241–261 (NLMN…FQGF), 289–309 (IPII…QMLA), 354–374 (FLDP…CAFF), 420–440 (AAFG…IGAI), and 441–461 (GSGT…EIFV).

The protein belongs to the SecY/SEC61-alpha family. In terms of assembly, the SEC61 channel-forming translocon complex consists of channel-forming core components SEC61A1, SEC61B and SEC61G and different auxiliary components such as SEC62 and SEC63. The SEC61 channel associates with the multi-pass translocon (MPT) complex. As to expression, expressed predominantly in epidermal cells of the embryo.

Its subcellular location is the endoplasmic reticulum membrane. In terms of biological role, component of SEC61 channel-forming translocon complex that mediates transport of signal peptide-containing precursor polypeptides across the endoplasmic reticulum (ER). Forms a ribosome receptor and a gated pore in the ER membrane, both functions required for cotranslational translocation of nascent polypeptides. May cooperate with auxiliary protein SEC62, SEC63 and HSPA5/BiP to enable post-translational transport of small presecretory proteins. The SEC61 channel is also involved in ER membrane insertion of transmembrane proteins: it mediates membrane insertion of the first few transmembrane segments of proteins, while insertion of subsequent transmembrane regions of multi-pass membrane proteins is mediated by the multi-pass translocon (MPT) complex. The polypeptide is Protein transport protein Sec61 subunit alpha (Halocynthia roretzi (Sea squirt)).